A 633-amino-acid chain; its full sequence is ABC transporter G family member 1 (633 aa).

In terms of domain architecture, ABC transporter spans 23–265; that stretch reads LTWEDLWVTA…FALSGFPCPT (243 aa). Residue 60–67 coordinates ATP; that stretch reads GPSGSGKS. The ABC transmembrane type-2 domain occupies 340–552; sequence TQSLVLTRRS…AYEGMFKNEF (213 aa). N352 carries N-linked (GlcNAc...) asparagine glycosylation. Transmembrane regions (helical) follow at residues 364 to 384, 394 to 414, 440 to 460, 470 to 490, 498 to 518, and 580 to 600; these read LAVYVVIAVGLGSLYYDVGFS, MLMFVASFITFMAIGGFPSFV, LSAMPYLLLVSLIPGAIAYFM, FIYFALVLFTCMMIVESLMMI, FLMGLIAGAGIQALMLLSGGF, and IDLVILLGMLVLYRVLFLLVV.

It belongs to the ABC transporter superfamily. ABCG family. As to quaternary structure, homodimer. In terms of tissue distribution, restricted to the petals, with the highest expression in the limb and, to a lesser extent, in petal tubes, probably in both epidermal and mesophyll cell layers.

It is found in the cell membrane. In terms of biological role, ABC transporter controlling the release of volatile organic compounds (VOCs), including floral volatile benzenoids and phenylpropanoids (FVBP), in flowers of fragrant cultivars (e.g. cv. Mitchell and cv. V26). This scent, mostly produced in the evening and night by the petals, attracts the pollinators (e.g. the night-active hawkmoth pollinator Manduca sexta). This Petunia hybrida (Petunia) protein is ABC transporter G family member 1.